The following is a 551-amino-acid chain: Methionine--tRNA ligase (551 aa).

The 'HIGH' region motif lies at 12-22 (PYANGPLHFGH). Residues Cys-144, Cys-147, Cys-157, and Cys-160 each coordinate Zn(2+). The short motif at 330-334 (QFSKS) is the 'KMSKS' region element. Lys-333 contacts ATP.

It belongs to the class-I aminoacyl-tRNA synthetase family. MetG type 1 subfamily. As to quaternary structure, monomer. It depends on Zn(2+) as a cofactor.

The protein resides in the cytoplasm. The catalysed reaction is tRNA(Met) + L-methionine + ATP = L-methionyl-tRNA(Met) + AMP + diphosphate. In terms of biological role, is required not only for elongation of protein synthesis but also for the initiation of all mRNA translation through initiator tRNA(fMet) aminoacylation. The protein is Methionine--tRNA ligase (metG) of Chlamydia pneumoniae (Chlamydophila pneumoniae).